A 209-amino-acid chain; its full sequence is MGKFQVISHPLIQHKLSILRRTTTSTKDFRELVDEIAMLMGYEVSRDLPLEDVEIQTPVATTVQKQLAGKKLAIVPILRAGIGMVDGFLSLVPAAKVGHIGMYRDEETFQPVEYLVKLPEDIDQRQIFVVDPMLATGGSAILAVDSLKKRGAASIKFVCLVAAPEGVAALQEAHPDVDIYTAALDEKLNEHGYIVPGLGDAGDRLFGTK.

5-phospho-alpha-D-ribose 1-diphosphate contacts are provided by residues Arg79, Arg104, and 131–139; that span reads DPMLATGGS. Uracil contacts are provided by residues Ile194 and 199–201; that span reads GDA. Residue Asp200 coordinates 5-phospho-alpha-D-ribose 1-diphosphate.

Belongs to the UPRTase family. Requires Mg(2+) as cofactor.

The enzyme catalyses UMP + diphosphate = 5-phospho-alpha-D-ribose 1-diphosphate + uracil. It participates in pyrimidine metabolism; UMP biosynthesis via salvage pathway; UMP from uracil: step 1/1. Its activity is regulated as follows. Allosterically activated by GTP. Its function is as follows. Catalyzes the conversion of uracil and 5-phospho-alpha-D-ribose 1-diphosphate (PRPP) to UMP and diphosphate. This is Uracil phosphoribosyltransferase from Streptococcus agalactiae serotype III (strain NEM316).